We begin with the raw amino-acid sequence, 846 residues long: Aminopeptidase N (846 aa).

Residues glutamate 120 and 252-256 (GAMEN) contribute to the substrate site. Histidine 288 contacts Zn(2+). Residue glutamate 289 is the Proton acceptor of the active site. 2 residues coordinate Zn(2+): histidine 292 and glutamate 311.

It belongs to the peptidase M1 family. As to quaternary structure, monomer. It depends on Zn(2+) as a cofactor.

The protein localises to the cytoplasm. It catalyses the reaction Release of an N-terminal amino acid, Xaa-|-Yaa- from a peptide, amide or arylamide. Xaa is preferably Ala, but may be most amino acids including Pro (slow action). When a terminal hydrophobic residue is followed by a prolyl residue, the two may be released as an intact Xaa-Pro dipeptide.. Aminopeptidase with broad substrate specificity to several peptides. It has more affinity for oligopeptides than for dipeptides. It plays an essential role in the metabolism, it may be involved in nitrogen supply or protein turnover. In Lactococcus lactis subsp. cremoris (Streptococcus cremoris), this protein is Aminopeptidase N (pepN).